The sequence spans 149 residues: Probable methylated-DNA--protein-cysteine methyltransferase (149 aa).

The Alkyl group acceptor role is filled by Cys-118.

Belongs to the MGMT family.

It catalyses the reaction a 6-O-methyl-2'-deoxyguanosine in DNA + L-cysteinyl-[protein] = S-methyl-L-cysteinyl-[protein] + a 2'-deoxyguanosine in DNA. The catalysed reaction is a 4-O-methyl-thymidine in DNA + L-cysteinyl-[protein] = a thymidine in DNA + S-methyl-L-cysteinyl-[protein]. In Acanthamoeba polyphaga (Amoeba), this protein is Probable methylated-DNA--protein-cysteine methyltransferase (MGMT).